The chain runs to 688 residues: Elongation factor G (688 aa).

In terms of domain architecture, tr-type G spans 8–282 (EKTRNIGIMA…AIIDYLPSPM (275 aa)). Residues 17–24 (AHIDAGKT), 81–85 (DTPGH), and 135–138 (NKMD) contribute to the GTP site.

This sequence belongs to the TRAFAC class translation factor GTPase superfamily. Classic translation factor GTPase family. EF-G/EF-2 subfamily.

The protein localises to the cytoplasm. Its function is as follows. Catalyzes the GTP-dependent ribosomal translocation step during translation elongation. During this step, the ribosome changes from the pre-translocational (PRE) to the post-translocational (POST) state as the newly formed A-site-bound peptidyl-tRNA and P-site-bound deacylated tRNA move to the P and E sites, respectively. Catalyzes the coordinated movement of the two tRNA molecules, the mRNA and conformational changes in the ribosome. The protein is Elongation factor G (fusA) of Apple proliferation phytoplasma.